Consider the following 451-residue polypeptide: Trigger factor (451 aa).

The PPIase FKBP-type domain maps to 173 to 258; sequence GDRVTLDFVG…LKKIEWAHLP (86 aa).

This sequence belongs to the FKBP-type PPIase family. Tig subfamily.

It is found in the cytoplasm. The enzyme catalyses [protein]-peptidylproline (omega=180) = [protein]-peptidylproline (omega=0). Its function is as follows. Involved in protein export. Acts as a chaperone by maintaining the newly synthesized protein in an open conformation. Functions as a peptidyl-prolyl cis-trans isomerase. The polypeptide is Trigger factor (Cupriavidus necator (strain ATCC 17699 / DSM 428 / KCTC 22496 / NCIMB 10442 / H16 / Stanier 337) (Ralstonia eutropha)).